Here is a 452-residue protein sequence, read N- to C-terminus: Tripartite motif-containing protein 51 (452 aa).

Residues 15-56 (CPICMNYFLDPVTIDCGHSFCRPCLYLNWQDTAVLAQCSECK) form an RING-type zinc finger. A B box-type zinc finger spans residues 88 to 129 (SEEQICGMHRETKKMFCEVDKSLLCLPCSNSQEHRNHIHCPI). Positions 93, 96, 115, and 121 each coordinate Zn(2+). The 184-residue stretch at 269 to 452 (ELSAGPITGL…LRPIFCCSHF (184 aa)) folds into the B30.2/SPRY domain.

Belongs to the TRIM/RBCC family.

The polypeptide is Tripartite motif-containing protein 51 (TRIM51) (Homo sapiens (Human)).